The following is a 377-amino-acid chain: tRNA-specific 2-thiouridylase MnmA (377 aa).

ATP-binding positions include Ala9–Ser16 and Leu35. The active-site Nucleophile is Cys105. A disulfide bridge links Cys105 with Cys201. Gly129 serves as a coordination point for ATP. An interaction with tRNA region spans residues Lys151–Gln153. Cys201 acts as the Cysteine persulfide intermediate in catalysis. Residues Arg307–Tyr308 form an interaction with tRNA region.

This sequence belongs to the MnmA/TRMU family.

The protein localises to the cytoplasm. The enzyme catalyses S-sulfanyl-L-cysteinyl-[protein] + uridine(34) in tRNA + AH2 + ATP = 2-thiouridine(34) in tRNA + L-cysteinyl-[protein] + A + AMP + diphosphate + H(+). Its function is as follows. Catalyzes the 2-thiolation of uridine at the wobble position (U34) of tRNA, leading to the formation of s(2)U34. The protein is tRNA-specific 2-thiouridylase MnmA of Leptospira borgpetersenii serovar Hardjo-bovis (strain JB197).